The chain runs to 410 residues: Peptidase T (410 aa).

His-79 contacts Zn(2+). Asp-81 is an active-site residue. Zn(2+) is bound at residue Asp-142. Glu-176 functions as the Proton acceptor in the catalytic mechanism. Zn(2+) is bound by residues Glu-177, Asp-199, and His-381.

This sequence belongs to the peptidase M20B family. The cofactor is Zn(2+).

It localises to the cytoplasm. It catalyses the reaction Release of the N-terminal residue from a tripeptide.. In terms of biological role, cleaves the N-terminal amino acid of tripeptides. This is Peptidase T from Listeria innocua serovar 6a (strain ATCC BAA-680 / CLIP 11262).